The following is a 306-amino-acid chain: Pantothenate kinase (306 aa).

Residue Gly91–Ser98 participates in ATP binding.

It belongs to the prokaryotic pantothenate kinase family.

Its subcellular location is the cytoplasm. It carries out the reaction (R)-pantothenate + ATP = (R)-4'-phosphopantothenate + ADP + H(+). It participates in cofactor biosynthesis; coenzyme A biosynthesis; CoA from (R)-pantothenate: step 1/5. The polypeptide is Pantothenate kinase (Streptococcus pneumoniae (strain Hungary19A-6)).